The chain runs to 259 residues: Thiazole synthase (259 aa).

Lys-95 functions as the Schiff-base intermediate with DXP in the catalytic mechanism. 1-deoxy-D-xylulose 5-phosphate is bound by residues Gly-156, 183 to 184 (AG), and 205 to 206 (NS).

Belongs to the ThiG family. In terms of assembly, homotetramer. Forms heterodimers with either ThiH or ThiS.

The protein localises to the cytoplasm. It catalyses the reaction [ThiS sulfur-carrier protein]-C-terminal-Gly-aminoethanethioate + 2-iminoacetate + 1-deoxy-D-xylulose 5-phosphate = [ThiS sulfur-carrier protein]-C-terminal Gly-Gly + 2-[(2R,5Z)-2-carboxy-4-methylthiazol-5(2H)-ylidene]ethyl phosphate + 2 H2O + H(+). It functions in the pathway cofactor biosynthesis; thiamine diphosphate biosynthesis. Catalyzes the rearrangement of 1-deoxy-D-xylulose 5-phosphate (DXP) to produce the thiazole phosphate moiety of thiamine. Sulfur is provided by the thiocarboxylate moiety of the carrier protein ThiS. In vitro, sulfur can be provided by H(2)S. The sequence is that of Thiazole synthase from Coxiella burnetii (strain CbuK_Q154) (Coxiella burnetii (strain Q154)).